The primary structure comprises 266 residues: tRNA pseudouridine synthase A (266 aa).

The Nucleophile role is filled by aspartate 55. Tyrosine 110 serves as a coordination point for substrate.

The protein belongs to the tRNA pseudouridine synthase TruA family.

It catalyses the reaction uridine(38/39/40) in tRNA = pseudouridine(38/39/40) in tRNA. Formation of pseudouridine at positions 38, 39 and 40 in the anticodon stem and loop of transfer RNAs. The polypeptide is tRNA pseudouridine synthase A (Thermococcus sibiricus (strain DSM 12597 / MM 739)).